Consider the following 273-residue polypeptide: Patr class II histocompatibility antigen, DO beta chain (273 aa).

The N-terminal stretch at 1-26 is a signal peptide; the sequence is MGSGWVPWVVALLVNLTRLDSSMTQG. Residues 27–120 form a beta-1 region; it reads TDSPEDFVIQ…LGAPFTVGRK (94 aa). Topologically, residues 27 to 224 are extracellular; that stretch reads TDSPEDFVIQ…RAQSEYSWKK (198 aa). Cystine bridges form between Cys-41–Cys-105 and Cys-143–Cys-199. Residue Asn-45 is glycosylated (N-linked (GlcNAc...) asparagine). The segment at 121-214 is beta-2; that stretch reads VQPEVTVYPE…SLLSPVSVEW (94 aa). Positions 123 to 213 constitute an Ig-like C1-type domain; sequence PEVTVYPERT…SSLLSPVSVE (91 aa). Positions 215–224 are connecting peptide; sequence RAQSEYSWKK. Residues 225-245 form a helical membrane-spanning segment; sequence MLSGIAAFLLGLIFLLVGIVI. Residues 246-273 lie on the Cytoplasmic side of the membrane; it reads QLRAQKGYVRTQMSGNEVSRAVLLPQSC.

It belongs to the MHC class II family. Heterodimer of an alpha chain (DOA) and a beta chain (DOB). Forms a heterotetrameric complex with an HLA-DM molecule during intracellular transport in endosomal/lysosomal compartments in B-cells.

The protein resides in the endosome membrane. It is found in the lysosome membrane. In terms of biological role, important modulator in the HLA class II restricted antigen presentation pathway by interaction with the HLA-DM molecule in B-cells. Modifies peptide exchange activity of HLA-DM. This Pan troglodytes (Chimpanzee) protein is Patr class II histocompatibility antigen, DO beta chain (Patr-DOB).